The sequence spans 513 residues: Maturase K (513 aa).

The protein belongs to the intron maturase 2 family. MatK subfamily.

It localises to the plastid. It is found in the chloroplast. Usually encoded in the trnK tRNA gene intron. Probably assists in splicing its own and other chloroplast group II introns. The chain is Maturase K from Phragmites australis (Common reed).